The primary structure comprises 163 residues: Shikimate kinase (163 aa).

10–15 is an ATP binding site; the sequence is GVGKTT. Mg(2+) is bound at residue T14. Positions 28, 52, and 75 each coordinate substrate. R116 is a binding site for ATP. A substrate-binding site is contributed by R134. R151 provides a ligand contact to ATP.

The protein belongs to the shikimate kinase family. Monomer. Mg(2+) is required as a cofactor.

The protein localises to the cytoplasm. The enzyme catalyses shikimate + ATP = 3-phosphoshikimate + ADP + H(+). The protein operates within metabolic intermediate biosynthesis; chorismate biosynthesis; chorismate from D-erythrose 4-phosphate and phosphoenolpyruvate: step 5/7. Functionally, catalyzes the specific phosphorylation of the 3-hydroxyl group of shikimic acid using ATP as a cosubstrate. The protein is Shikimate kinase of Streptococcus pyogenes serotype M12 (strain MGAS2096).